The sequence spans 370 residues: Phenylalanine dehydrogenase (370 aa).

NAD(+) is bound at residue Arg-44. Position 68 (Lys-68) interacts with L-phenylalanine. Lys-80 acts as the Proton donor/acceptor in catalysis. 114 to 115 (TD) is a binding site for L-phenylalanine. NAD(+) is bound by residues Asp-115, Ser-146, Thr-150, 180 to 186 (GLGKVGF), 203 to 204 (DV), 243 to 244 (AI), and 264 to 266 (AAN). Asn-266 provides a ligand contact to L-phenylalanine.

It belongs to the Glu/Leu/Phe/Val dehydrogenases family.

It carries out the reaction L-phenylalanine + NAD(+) + H2O = 3-phenylpyruvate + NH4(+) + NADH + H(+). Its pathway is amino-acid biosynthesis; L-phenylalanine biosynthesis; L-phenylalanine from phenylpyruvate (PDH route): step 1/1. Catalyzes the reversible NAD(+)-dependent oxidative deamination of L-phenylalanine to phenylpyruvate. The polypeptide is Phenylalanine dehydrogenase (Caldalkalibacillus thermarum (strain TA2.A1)).